Reading from the N-terminus, the 757-residue chain is Exo-alpha-(1-&gt;6)-L-arabinopyranosidase (757 aa).

Asp-232 is a catalytic residue.

It belongs to the glycosyl hydrolase 3 family. In terms of assembly, homotetramer.

Its activity is regulated as follows. Completely inhibited by Cu(2+) and activated by Co(2+). Its function is as follows. Catalyzes the hydrolysis of a non-reducing terminal alpha-L-arabinopyranosidic linkage in ginsenoside Rb2 (alpha-L-arabinopyranosyl-(1-&gt;6)-alpha-D-glucopyranosyl) to release alpha-D-glucopyranosyl (Rd). It is not able to hydrolyze alpha-L-arabinofuranosyl-(1-&gt;6)-alpha-D-glucopyranosyl (Rc). The polypeptide is Exo-alpha-(1-&gt;6)-L-arabinopyranosidase (apy) (Bifidobacterium longum).